We begin with the raw amino-acid sequence, 304 residues long: UDP-N-acetylenolpyruvoylglucosamine reductase (304 aa).

One can recognise an FAD-binding PCMH-type domain in the interval 33–198 (RVGGPADILV…IEATVELESG (166 aa)). R177 is a catalytic residue. S227 functions as the Proton donor in the catalytic mechanism. The active site involves E297.

Belongs to the MurB family. It depends on FAD as a cofactor.

Its subcellular location is the cytoplasm. It carries out the reaction UDP-N-acetyl-alpha-D-muramate + NADP(+) = UDP-N-acetyl-3-O-(1-carboxyvinyl)-alpha-D-glucosamine + NADPH + H(+). It functions in the pathway cell wall biogenesis; peptidoglycan biosynthesis. Its function is as follows. Cell wall formation. This is UDP-N-acetylenolpyruvoylglucosamine reductase from Clostridium perfringens (strain ATCC 13124 / DSM 756 / JCM 1290 / NCIMB 6125 / NCTC 8237 / Type A).